Reading from the N-terminus, the 451-residue chain is Interferon-related developmental regulator 1 (451 aa).

Basic residues predominate over residues Met-1–Pro-10. The interval Met-1 to Glu-69 is disordered. A compositionally biased stretch (low complexity) spans Ala-23–Gly-33. Positions Glu-49–Ser-61 are enriched in polar residues.

Belongs to the IFRD family. As to quaternary structure, interacts with PSIP1/LEDGF. Expressed in a variety of tissues.

Could play a role in regulating gene activity in the proliferative and/or differentiative pathways induced by NGF. May be an autocrine factor that attenuates or amplifies the initial ligand-induced signal. This Homo sapiens (Human) protein is Interferon-related developmental regulator 1 (IFRD1).